Consider the following 383-residue polypeptide: Deoxyguanosinetriphosphate triphosphohydrolase-like protein (383 aa).

Residues 62–198 (RLTHSLEVST…AALADDISYI (137 aa)) form the HD domain.

This sequence belongs to the dGTPase family. Type 2 subfamily.

The sequence is that of Deoxyguanosinetriphosphate triphosphohydrolase-like protein from Rickettsia felis (strain ATCC VR-1525 / URRWXCal2) (Rickettsia azadi).